Reading from the N-terminus, the 62-residue chain is Large ribosomal subunit protein bL28 (62 aa).

This sequence belongs to the bacterial ribosomal protein bL28 family.

The sequence is that of Large ribosomal subunit protein bL28 from Helicobacter pylori (strain P12).